Reading from the N-terminus, the 351-residue chain is Foldase protein PrsA 1 (351 aa).

An N-terminal signal peptide occupies residues 1–22; that stretch reads MKNSNKLIASVVTLASVMALAA. Cysteine 23 carries N-palmitoyl cysteine lipidation. Cysteine 23 carries S-diacylglycerol cysteine lipidation. The PpiC domain occupies 145-240; that stretch reads TPTMAVEMIT…KKFYIVKVTK (96 aa). Low complexity-rich tracts occupy residues 303–317 and 326–351; these read KTKA…SESS and ESEQ…PAAQ. The disordered stretch occupies residues 303–351; it reads KTKAASESSTTSESSKAAEENPSESEQTQTSSAEEPTETEAQTQEPAAQ.

This sequence belongs to the PrsA family.

The protein resides in the cell membrane. The catalysed reaction is [protein]-peptidylproline (omega=180) = [protein]-peptidylproline (omega=0). Functionally, plays a major role in protein secretion by helping the post-translocational extracellular folding of several secreted proteins. The sequence is that of Foldase protein PrsA 1 (prsA1) from Streptococcus pyogenes serotype M18 (strain MGAS8232).